Reading from the N-terminus, the 128-residue chain is Histone H2A.2 (128 aa).

The protein belongs to the histone H2A family. As to quaternary structure, the nucleosome is a histone octamer containing two molecules each of H2A, H2B, H3 and H4 assembled in one H3-H4 heterotetramer and two H2A-H2B heterodimers. The octamer wraps approximately 147 bp of DNA. Expressed in the generative cell within the bicellular pollen. Not detected in other reproductive or vegetative tissues.

The protein localises to the nucleus. It is found in the chromosome. Functionally, core component of nucleosome. Nucleosomes wrap and compact DNA into chromatin, limiting DNA accessibility to the cellular machineries which require DNA as a template. Histones thereby play a central role in transcription regulation, DNA repair, DNA replication and chromosomal stability. DNA accessibility is regulated via a complex set of post-translational modifications of histones, also called histone code, and nucleosome remodeling. May be involved in the repression of gene expression in male gametes. This is Histone H2A.2 (gH2A) from Lilium longiflorum (Trumpet lily).